A 199-amino-acid polypeptide reads, in one-letter code: dITP/XTP pyrophosphatase (199 aa).

12–17 (SGNAGK) provides a ligand contact to substrate. The active-site Proton acceptor is the Asp-73. Asp-73 serves as a coordination point for Mg(2+). Substrate contacts are provided by residues Ser-74, 157 to 160 (FGYD), Lys-180, and 185 to 186 (HR).

The protein belongs to the HAM1 NTPase family. Homodimer. It depends on Mg(2+) as a cofactor.

The enzyme catalyses XTP + H2O = XMP + diphosphate + H(+). It catalyses the reaction dITP + H2O = dIMP + diphosphate + H(+). The catalysed reaction is ITP + H2O = IMP + diphosphate + H(+). Pyrophosphatase that catalyzes the hydrolysis of nucleoside triphosphates to their monophosphate derivatives, with a high preference for the non-canonical purine nucleotides XTP (xanthosine triphosphate), dITP (deoxyinosine triphosphate) and ITP. Seems to function as a house-cleaning enzyme that removes non-canonical purine nucleotides from the nucleotide pool, thus preventing their incorporation into DNA/RNA and avoiding chromosomal lesions. The chain is dITP/XTP pyrophosphatase from Neisseria meningitidis serogroup B (strain ATCC BAA-335 / MC58).